A 190-amino-acid chain; its full sequence is uncharacterized protein (190 aa).

Residues 1–185 (MITMFKIVRG…LALETIGLGD (185 aa)) enclose the Macro domain.

This is an uncharacterized protein from Pyrococcus horikoshii (strain ATCC 700860 / DSM 12428 / JCM 9974 / NBRC 100139 / OT-3).